Consider the following 471-residue polypeptide: RuvB-like protein 2 (471 aa).

75–82 (GPPSTGKT) is a binding site for ATP.

The protein belongs to the RuvB family. In terms of assembly, probably forms a homohexamer. Interacts with RVB1 and may form heterododecamers with RVB1. Component of the SWR1 chromatin remodeling complex composed of at least ACT1, ARP4, RVB1, RVB2, ARP6, YAF9, VPS71, VPS72, SWC3, SWC4, SWC5, SWC7 and SWR1, and perhaps BDF1. Component of the chromatin-remodeling INO80 complex, at least composed of ARP4, ARP5, ARP8, RVB1, RVB2, TAF14, NHP10, IES1, IES3, IES4, IES6, ACT1, IES2, IES5 and INO80. Also belongs to the R2TP complex composed of at least RVB1, RVB2, TAH1 and PIH1. Interacts with SPT15/TBP.

It is found in the nucleus. Its subcellular location is the nucleoplasm. The catalysed reaction is ATP + H2O = ADP + phosphate + H(+). Its function is as follows. DNA helicase which participates in several chromatin remodeling complexes, including the SWR1 and the INO80 complexes. The SWR1 complex mediates the ATP-dependent exchange of histone H2A for the H2A variant HZT1 leading to transcriptional regulation of selected genes by chromatin remodeling. The INO80 complex remodels chromatin by shifting nucleosomes. Its ability to induce transcription of some phosphate-responsive genes is modulated by inositol polyphosphates. The INO80 complex is involved in DNA repair by associating to 'Ser-129' phosphorylated H2A histones as a response to DNA damage. During transcription may recruit SPT15/TBP to the TATA-boxes of involved genes. Required for box C/D and box H/ACA snoRNA accumulation and involved in pre-rRNA processing. The chain is RuvB-like protein 2 (RVB2) from Saccharomyces cerevisiae (strain ATCC 204508 / S288c) (Baker's yeast).